The primary structure comprises 376 residues: Queuine tRNA-ribosyltransferase (376 aa).

The active-site Proton acceptor is the D90. Substrate-binding positions include D90–F94, D144, Q193, and G220. The interval G251–D257 is RNA binding. D270 serves as the catalytic Nucleophile. Residues T275–R279 are RNA binding; important for wobble base 34 recognition. Zn(2+) contacts are provided by C308, C310, C313, and H339.

The protein belongs to the queuine tRNA-ribosyltransferase family. As to quaternary structure, homodimer. Within each dimer, one monomer is responsible for RNA recognition and catalysis, while the other monomer binds to the replacement base PreQ1. It depends on Zn(2+) as a cofactor.

It catalyses the reaction 7-aminomethyl-7-carbaguanine + guanosine(34) in tRNA = 7-aminomethyl-7-carbaguanosine(34) in tRNA + guanine. It functions in the pathway tRNA modification; tRNA-queuosine biosynthesis. Its function is as follows. Catalyzes the base-exchange of a guanine (G) residue with the queuine precursor 7-aminomethyl-7-deazaguanine (PreQ1) at position 34 (anticodon wobble position) in tRNAs with GU(N) anticodons (tRNA-Asp, -Asn, -His and -Tyr). Catalysis occurs through a double-displacement mechanism. The nucleophile active site attacks the C1' of nucleotide 34 to detach the guanine base from the RNA, forming a covalent enzyme-RNA intermediate. The proton acceptor active site deprotonates the incoming PreQ1, allowing a nucleophilic attack on the C1' of the ribose to form the product. After dissociation, two additional enzymatic reactions on the tRNA convert PreQ1 to queuine (Q), resulting in the hypermodified nucleoside queuosine (7-(((4,5-cis-dihydroxy-2-cyclopenten-1-yl)amino)methyl)-7-deazaguanosine). The chain is Queuine tRNA-ribosyltransferase from Cupriavidus pinatubonensis (strain JMP 134 / LMG 1197) (Cupriavidus necator (strain JMP 134)).